A 350-amino-acid polypeptide reads, in one-letter code: C4-dicarboxylate-binding protein DctB (350 aa).

The signal sequence occupies residues 1 to 18 (MKSLLACLALMIAGIATA).

It belongs to the bacterial solute-binding protein 7 family.

It localises to the secreted. Functionally, part of the binding-protein-dependent transport system for uptake of C4-dicarboxylates. Responsible for growth on fumarate and succinate but not malate. Is not directly involved in C4-dicarboxylate uptake, but plays a sensory role in the DctS/DctR two-component system which regulates the expression of the dctA C4-dicarboxylate transporter. This chain is C4-dicarboxylate-binding protein DctB (dctB), found in Bacillus subtilis (strain 168).